Here is a 189-residue protein sequence, read N- to C-terminus: MKVLSFLIRQDHLLYLDIFAKQNNLTRSDAIRYAISVLDEESTPVSLVGFPGIKLVRTSVKLAENVISRIDRLAILSKITRSDVIRNAIYHLLINNAPKQLPPVTAQTEKKYGYVCPYCVSRFPTVRALKIHLKRRHNGFPWCPVCYKPLKNKNATNHFRRFTDPQHQFWYMISRKRYLSSHRKEAVKQ.

The C2H2-type zinc-finger motif lies at 114–137 (YVCPYCVSRFPTVRALKIHLKRRH).

In Acidianus two-tailed virus (ATV), this protein is Putative zinc finger protein ORF189.